Consider the following 247-residue polypeptide: Carboxy-S-adenosyl-L-methionine synthase (247 aa).

S-adenosyl-L-methionine is bound by residues Tyr39, 64-66, 89-90, 117-118, Asn132, and Arg199; these read GCS, DN, and DI.

This sequence belongs to the class I-like SAM-binding methyltransferase superfamily. Cx-SAM synthase family. Homodimer.

It catalyses the reaction prephenate + S-adenosyl-L-methionine = carboxy-S-adenosyl-L-methionine + 3-phenylpyruvate + H2O. Functionally, catalyzes the conversion of S-adenosyl-L-methionine (SAM) to carboxy-S-adenosyl-L-methionine (Cx-SAM). This is Carboxy-S-adenosyl-L-methionine synthase from Salmonella paratyphi B (strain ATCC BAA-1250 / SPB7).